The chain runs to 518 residues: Homoserine O-acetyltransferase (518 aa).

Residues 69–468 enclose the AB hydrolase-1 domain; the sequence is NVMVICHALT…DSPEGHDAFL (400 aa). Serine 182 is an active-site residue. Serine 182 serves as the catalytic Nucleophile. The interval 267-365 is disordered; sequence RFGRNIPDPS…PNSVSDPFRP (99 aa). Positions 290–303 are enriched in basic and acidic residues; sequence PAEEHYDIHNEGFR. A compositionally biased stretch (low complexity) spans 310 to 341; sequence RSSTTTSDAPPSPTRTSSTSSTDAITPASTTP. Catalysis depends on residues aspartate 435 and histidine 464.

This sequence belongs to the AB hydrolase superfamily. MetX family.

It catalyses the reaction L-homoserine + acetyl-CoA = O-acetyl-L-homoserine + CoA. It functions in the pathway amino-acid biosynthesis; L-methionine biosynthesis via de novo pathway; O-acetyl-L-homoserine from L-homoserine: step 1/1. Functionally, commits homoserine to the methionine biosynthesis pathway by catalyzing its O-acetylation. This is Homoserine O-acetyltransferase (MET2) from Ascobolus immersus.